The chain runs to 370 residues: ADP-ribosylation factor-like protein 13B (370 aa).

4 S-palmitoyl cysteine lipidation sites follow: cysteine 12, cysteine 13, cysteine 14, and cysteine 15. Residues 31–38, 75–79, and 134–137 each bind GTP; these read GIGSAGKT, DVGGD, and NNQN. Lysine 239 is covalently cross-linked (Glycyl lysine isopeptide (Lys-Gly) (interchain with G-Cter in SUMO)). The disordered stretch occupies residues 255-331; sequence RNQPPVQPPI…PVSPESNSVK (77 aa). Pro residues predominate over residues 259-271; it reads PVQPPIPPDPPSD. Composition is skewed to polar residues over residues 287–303 and 314–328; these read LASS…TPET and RISQ…PESN. Lysine 331 is covalently cross-linked (Glycyl lysine isopeptide (Lys-Gly) (interchain with G-Cter in SUMO)). Positions 366–369 are RVVP region; sequence RVVP.

The protein belongs to the small GTPase superfamily. Arf family. In terms of assembly, monomer. Post-translationally, sumoylation regulates the targeting of membrane sensory receptors to the cilium. As to expression, specifically expressed in ciliated sensory neurons throughout development in both hermaphrodites.

Its subcellular location is the cell projection. It is found in the cilium membrane. In terms of biological role, cilium-specific protein required to control the microtubule-based, ciliary axoneme structure. Required for normal sensory cilium function. May act by maintaining the association between IFT subcomplexes A and B. The protein is ADP-ribosylation factor-like protein 13B (arl-13) of Caenorhabditis elegans.